The following is a 306-amino-acid chain: Aspartate carbamoyltransferase catalytic subunit (306 aa).

Residues R54 and T55 each coordinate carbamoyl phosphate. K83 contributes to the L-aspartate binding site. 3 residues coordinate carbamoyl phosphate: R104, H132, and Q135. L-aspartate is bound by residues R165 and R227. Carbamoyl phosphate contacts are provided by L266 and P267.

This sequence belongs to the aspartate/ornithine carbamoyltransferase superfamily. ATCase family. In terms of assembly, heterododecamer (2C3:3R2) of six catalytic PyrB chains organized as two trimers (C3), and six regulatory PyrI chains organized as three dimers (R2).

It carries out the reaction carbamoyl phosphate + L-aspartate = N-carbamoyl-L-aspartate + phosphate + H(+). It participates in pyrimidine metabolism; UMP biosynthesis via de novo pathway; (S)-dihydroorotate from bicarbonate: step 2/3. In terms of biological role, catalyzes the condensation of carbamoyl phosphate and aspartate to form carbamoyl aspartate and inorganic phosphate, the committed step in the de novo pyrimidine nucleotide biosynthesis pathway. This is Aspartate carbamoyltransferase catalytic subunit from Finegoldia magna (strain ATCC 29328 / DSM 20472 / WAL 2508) (Peptostreptococcus magnus).